A 209-amino-acid chain; its full sequence is Ubiquitin-conjugating enzyme E2 S (209 aa).

The UBC core domain occupies 14–160; it reads QTIRQVMREL…ARMMTEIHAQ (147 aa). The active-site Glycyl thioester intermediate is the Cys-98. Positions 165 to 209 are disordered; that stretch reads GVGATGDAKDDGGPSTKKHAGLDKKLQDKKKEKLLKEKKRMLKRL. Residues 184–199 show a composition bias toward basic and acidic residues; it reads AGLDKKLQDKKKEKLL. Over residues 200–209 the composition is skewed to basic residues; the sequence is KEKKRMLKRL.

This sequence belongs to the ubiquitin-conjugating enzyme family.

The enzyme catalyses S-ubiquitinyl-[E1 ubiquitin-activating enzyme]-L-cysteine + [E2 ubiquitin-conjugating enzyme]-L-cysteine = [E1 ubiquitin-activating enzyme]-L-cysteine + S-ubiquitinyl-[E2 ubiquitin-conjugating enzyme]-L-cysteine.. It participates in protein modification; protein ubiquitination. Functionally, catalyzes the covalent attachment of ubiquitin to other proteins. Acts as an essential factor of the anaphase promoting complex/cyclosome (APC/C), a cell cycle-regulated ubiquitin ligase that controls progression through mitosis. Acts by specifically elongating polyubiquitin chains initiated by the E2 enzyme vih/UbcH10 on APC/C substrates, enhancing the degradation of APC/C substrates by the proteasome and promoting mitotic exit. This chain is Ubiquitin-conjugating enzyme E2 S, found in Drosophila simulans (Fruit fly).